Reading from the N-terminus, the 178-residue chain is Beta-lytic metalloendopeptidase (178 aa).

Cys65 and Cys111 form a disulfide bridge. Positions 120 and 122 each coordinate Zn(2+). Cys155 and Cys168 are oxidised to a cystine.

The protein belongs to the peptidase M23A family. Zn(2+) is required as a cofactor.

The catalysed reaction is Cleavage of N-acetylmuramoyl-|-Ala, and of the insulin B chain at 23-Gly-|-Phe-24 &gt; 18-Val-|-Cys(SO3H).. The polypeptide is Beta-lytic metalloendopeptidase (Lysobacter enzymogenes).